We begin with the raw amino-acid sequence, 268 residues long: MMQRCLRLQKPLALRRGLRLAQANSQAVATEAPEAEPLDAFERQYLKERIEISPFQRLFLGAGSSIAALLNPRRHDMIACLGETTGEDALWTILDTMQASEEGQRIMADKPRIHTSTIDFKYLETLPPDTFGAAYVKFLKDNQVTPDSRMAVRFLEDPKLAYLMTRYRECHDLIHTVLDMPTNMLGEVAVKWVEALNTGLPMCYGGAVFGAVRLRPKQRRAYLKHYLPWALENGKRTKPLMPVYWEKRWEQNIHELRSELGITVLNKA.

4 residues coordinate Zn(2+): His-171, Asp-172, His-175, and Glu-187.

The protein belongs to the COQ4 family. In terms of assembly, component of a multi-subunit COQ enzyme complex. Requires Zn(2+) as cofactor.

The protein localises to the mitochondrion inner membrane. It carries out the reaction a 4-hydroxy-3-methoxy-5-(all-trans-polyprenyl)benzoate + H(+) = a 2-methoxy-6-(all-trans-polyprenyl)phenol + CO2. Its pathway is cofactor biosynthesis; ubiquinone biosynthesis. Lyase that catalyzes the C1-decarboxylation of 4-hydroxy-3-methoxy-5-(all-trans-polyprenyl)benzoic acid into 2-methoxy-6-(all-trans-polyprenyl)phenol during ubiquinone biosynthesis. The sequence is that of Ubiquinone biosynthesis protein COQ4 homolog, mitochondrial from Drosophila melanogaster (Fruit fly).